Here is a 465-residue protein sequence, read N- to C-terminus: GTPase Der (465 aa).

2 consecutive EngA-type G domains span residues 3 to 167 (PLVA…PEEG) and 179 to 352 (VRIA…ASAT). GTP is bound by residues 9-16 (GRPNVGKS), 57-61 (DTGGI), 119-122 (NKID), 185-192 (GRPNVGKS), 232-236 (DTAGL), and 297-300 (NKWD). The 85-residue stretch at 353-437 (HEFSTSEVNQ…PVRFIFREGA (85 aa)) folds into the KH-like domain.

It belongs to the TRAFAC class TrmE-Era-EngA-EngB-Septin-like GTPase superfamily. EngA (Der) GTPase family. Associates with the 50S ribosomal subunit.

In terms of biological role, GTPase that plays an essential role in the late steps of ribosome biogenesis. The protein is GTPase Der of Xanthomonas axonopodis pv. citri (strain 306).